We begin with the raw amino-acid sequence, 347 residues long: Protein RecA (347 aa).

An ATP-binding site is contributed by Gly-65 to Thr-72. Positions Ser-328–Phe-347 are disordered.

The protein belongs to the RecA family.

The protein localises to the cytoplasm. Can catalyze the hydrolysis of ATP in the presence of single-stranded DNA, the ATP-dependent uptake of single-stranded DNA by duplex DNA, and the ATP-dependent hybridization of homologous single-stranded DNAs. It interacts with LexA causing its activation and leading to its autocatalytic cleavage. In Vibrio parahaemolyticus serotype O3:K6 (strain RIMD 2210633), this protein is Protein RecA.